Reading from the N-terminus, the 185-residue chain is Large ribosomal subunit protein uL22 (185 aa).

The protein belongs to the universal ribosomal protein uL22 family.

The sequence is that of Large ribosomal subunit protein uL22 (RPL17) from Debaryomyces hansenii (strain ATCC 36239 / CBS 767 / BCRC 21394 / JCM 1990 / NBRC 0083 / IGC 2968) (Yeast).